Reading from the N-terminus, the 375-residue chain is N5-carboxyaminoimidazole ribonucleotide synthase (375 aa).

Residues Arg-108, Lys-148, 153–159 (GYDGKGQ), 183–186 (EQYL), Glu-191, His-214, and 266–267 (NE) each bind ATP. One can recognise an ATP-grasp domain in the interval 112 to 296 (KQTLLEANTQ…QFDTHILAIT (185 aa)).

It belongs to the PurK/PurT family. As to quaternary structure, homodimer.

It carries out the reaction 5-amino-1-(5-phospho-beta-D-ribosyl)imidazole + hydrogencarbonate + ATP = 5-carboxyamino-1-(5-phospho-D-ribosyl)imidazole + ADP + phosphate + 2 H(+). It participates in purine metabolism; IMP biosynthesis via de novo pathway; 5-amino-1-(5-phospho-D-ribosyl)imidazole-4-carboxylate from 5-amino-1-(5-phospho-D-ribosyl)imidazole (N5-CAIR route): step 1/2. In terms of biological role, catalyzes the ATP-dependent conversion of 5-aminoimidazole ribonucleotide (AIR) and HCO(3)(-) to N5-carboxyaminoimidazole ribonucleotide (N5-CAIR). The polypeptide is N5-carboxyaminoimidazole ribonucleotide synthase (Staphylococcus epidermidis (strain ATCC 35984 / DSM 28319 / BCRC 17069 / CCUG 31568 / BM 3577 / RP62A)).